We begin with the raw amino-acid sequence, 557 residues long: Potassium-transporting ATPase potassium-binding subunit (557 aa).

Helical transmembrane passes span 5–25 (GFLL…PLGS), 63–83 (LSAI…MLLG), 132–152 (GLTV…FALI), 170–190 (LLRI…LFFI), 253–273 (FVQM…FGEV), 283–303 (LLWA…WAEV), 329–349 (VLVS…AVIA), 356–376 (ALGG…FGGV), 379–399 (GLYG…LMIG), 416–436 (LTAL…ALAM), 484–504 (LLAF…MAIA), and 526–546 (LFVG…FIPA).

It belongs to the KdpA family. As to quaternary structure, the system is composed of three essential subunits: KdpA, KdpB and KdpC.

The protein resides in the cell inner membrane. Part of the high-affinity ATP-driven potassium transport (or Kdp) system, which catalyzes the hydrolysis of ATP coupled with the electrogenic transport of potassium into the cytoplasm. This subunit binds the periplasmic potassium ions and delivers the ions to the membrane domain of KdpB through an intramembrane tunnel. The chain is Potassium-transporting ATPase potassium-binding subunit from Escherichia fergusonii (strain ATCC 35469 / DSM 13698 / CCUG 18766 / IAM 14443 / JCM 21226 / LMG 7866 / NBRC 102419 / NCTC 12128 / CDC 0568-73).